We begin with the raw amino-acid sequence, 89 residues long: Small ribosomal subunit protein uS19 (89 aa).

This sequence belongs to the universal ribosomal protein uS19 family.

Functionally, protein S19 forms a complex with S13 that binds strongly to the 16S ribosomal RNA. This Xanthomonas axonopodis pv. citri (strain 306) protein is Small ribosomal subunit protein uS19.